Here is a 136-residue protein sequence, read N- to C-terminus: Ribosome-binding factor A (136 aa).

Belongs to the RbfA family. Monomer. Binds 30S ribosomal subunits, but not 50S ribosomal subunits or 70S ribosomes.

The protein localises to the cytoplasm. Functionally, one of several proteins that assist in the late maturation steps of the functional core of the 30S ribosomal subunit. Associates with free 30S ribosomal subunits (but not with 30S subunits that are part of 70S ribosomes or polysomes). Required for efficient processing of 16S rRNA. May interact with the 5'-terminal helix region of 16S rRNA. In Yersinia pestis bv. Antiqua (strain Antiqua), this protein is Ribosome-binding factor A.